A 231-amino-acid chain; its full sequence is Acyl-protein thioesterase 2 (231 aa).

Cys-2 carries S-palmitoyl cysteine lipidation. Ser-82 is subject to Phosphoserine. Active-site charge relay system residues include Ser-122, Asp-176, and His-210.

It belongs to the AB hydrolase superfamily. AB hydrolase 2 family.

It localises to the cytoplasm. The enzyme catalyses S-hexadecanoyl-L-cysteinyl-[protein] + H2O = L-cysteinyl-[protein] + hexadecanoate + H(+). It carries out the reaction prostaglandin E2 1-glyceryl ester + H2O = prostaglandin E2 + glycerol + H(+). The catalysed reaction is 1-hexadecanoyl-sn-glycero-3-phosphocholine + H2O = sn-glycerol 3-phosphocholine + hexadecanoate + H(+). It catalyses the reaction 1-octadecanoyl-sn-glycero-3-phosphocholine + H2O = octadecanoate + sn-glycerol 3-phosphocholine + H(+). The enzyme catalyses 1-hexadecanoyl-sn-glycero-3-phosphate + H2O = sn-glycerol 3-phosphate + hexadecanoate + H(+). It carries out the reaction 1-hexadecanoyl-sn-glycero-3-phospho-L-serine + H2O = sn-glycero-3-phospho-L-serine + hexadecanoate + H(+). Acts as an acyl-protein thioesterase hydrolyzing fatty acids from S-acylated cysteine residues in proteins such as trimeric G alpha proteins, GSDMD, GAP43, ZDHHC6 or HRAS. Deacylates GAP43. Mediates depalmitoylation of ZDHHC6. Has lysophospholipase activity. Hydrolyzes prostaglandin glycerol esters (PG-Gs) in the following order prostaglandin D2-glycerol ester (PGD2-G) &gt; prostaglandin E2 glycerol ester (PGE2-G) &gt; prostaglandin F2-alpha-glycerol ester (PGF2-alpha-G). Hydrolyzes 1-arachidonoylglycerol but not 2-arachidonoylglycerol or arachidonoylethanolamide. The protein is Acyl-protein thioesterase 2 (Lypla2) of Rattus norvegicus (Rat).